The primary structure comprises 55 residues: Large ribosomal subunit protein bL33 (55 aa).

Belongs to the bacterial ribosomal protein bL33 family.

The sequence is that of Large ribosomal subunit protein bL33 from Alcanivorax borkumensis (strain ATCC 700651 / DSM 11573 / NCIMB 13689 / SK2).